A 432-amino-acid polypeptide reads, in one-letter code: Adenylosuccinate synthetase (432 aa).

Residues 13–19 (GDEGKGK) and 41–43 (GHT) contribute to the GTP site. The active-site Proton acceptor is Asp-14. Mg(2+) is bound by residues Asp-14 and Gly-41. Residues 14–17 (DEGK), 39–42 (NAGH), Thr-130, Arg-144, Gln-225, Thr-240, and Arg-304 contribute to the IMP site. His-42 functions as the Proton donor in the catalytic mechanism. 300–306 (ATTGRKR) contributes to the substrate binding site. Residues Arg-306, 332–334 (KLD), and 415–417 (STG) each bind GTP.

This sequence belongs to the adenylosuccinate synthetase family. In terms of assembly, homodimer. Mg(2+) serves as cofactor.

It is found in the cytoplasm. The catalysed reaction is IMP + L-aspartate + GTP = N(6)-(1,2-dicarboxyethyl)-AMP + GDP + phosphate + 2 H(+). Its pathway is purine metabolism; AMP biosynthesis via de novo pathway; AMP from IMP: step 1/2. In terms of biological role, plays an important role in the de novo pathway of purine nucleotide biosynthesis. Catalyzes the first committed step in the biosynthesis of AMP from IMP. This Photobacterium profundum (strain SS9) protein is Adenylosuccinate synthetase.